The sequence spans 277 residues: Diaminopimelate epimerase (277 aa).

2 residues coordinate substrate: Asn11 and Asn72. The active-site Proton donor is the Cys81. Residues 82–83, Asn189, and 207–208 each bind substrate; these read GN and ER. Cys217 (proton acceptor) is an active-site residue. 218-219 provides a ligand contact to substrate; sequence GT.

It belongs to the diaminopimelate epimerase family. As to quaternary structure, homodimer.

It localises to the cytoplasm. The enzyme catalyses (2S,6S)-2,6-diaminopimelate = meso-2,6-diaminopimelate. The protein operates within amino-acid biosynthesis; L-lysine biosynthesis via DAP pathway; DL-2,6-diaminopimelate from LL-2,6-diaminopimelate: step 1/1. In terms of biological role, catalyzes the stereoinversion of LL-2,6-diaminopimelate (L,L-DAP) to meso-diaminopimelate (meso-DAP), a precursor of L-lysine and an essential component of the bacterial peptidoglycan. In Hydrogenobaculum sp. (strain Y04AAS1), this protein is Diaminopimelate epimerase.